The following is a 446-amino-acid chain: Argininosuccinate synthase (446 aa).

ATP is bound by residues 17 to 25 (AFSGGLDTS) and Ala-43. Tyr-99 contacts L-citrulline. Positions 129 and 131 each coordinate ATP. The L-aspartate site is built by Thr-131, Asn-135, and Asp-136. Asn-135 lines the L-citrulline pocket. An ATP-binding site is contributed by Asp-136. Positions 139 and 192 each coordinate L-citrulline. Residue Asp-194 participates in ATP binding. Positions 201, 203, and 280 each coordinate L-citrulline.

Belongs to the argininosuccinate synthase family. Type 2 subfamily. In terms of assembly, homotetramer.

It is found in the cytoplasm. It catalyses the reaction L-citrulline + L-aspartate + ATP = 2-(N(omega)-L-arginino)succinate + AMP + diphosphate + H(+). The protein operates within amino-acid biosynthesis; L-arginine biosynthesis; L-arginine from L-ornithine and carbamoyl phosphate: step 2/3. In Variovorax paradoxus (strain S110), this protein is Argininosuccinate synthase.